The sequence spans 254 residues: Ribonuclease 3 (254 aa).

The RNase III domain maps to 24–154 (LRRLQETLGV…VIGALFLDSG (131 aa)). Glu67 lines the Mg(2+) pocket. Asp71 is an active-site residue. Mg(2+)-binding residues include Asp140 and Glu143. The active site involves Glu143. The 70-residue stretch at 181–250 (DYKSTLQVLA…ARLAWEQLSG (70 aa)) folds into the DRBM domain.

It belongs to the ribonuclease III family. As to quaternary structure, homodimer. Mg(2+) serves as cofactor.

It is found in the cytoplasm. It carries out the reaction Endonucleolytic cleavage to 5'-phosphomonoester.. Digests double-stranded RNA. Involved in the processing of primary rRNA transcript to yield the immediate precursors to the large and small rRNAs (23S and 16S). Processes some mRNAs, and tRNAs when they are encoded in the rRNA operon. Processes pre-crRNA and tracrRNA of type II CRISPR loci if present in the organism. This chain is Ribonuclease 3, found in Treponema pallidum (strain Nichols).